Consider the following 380-residue polypeptide: DNA primase small subunit PriS (380 aa).

Residues aspartate 101, aspartate 103, and aspartate 282 contribute to the active site.

The protein belongs to the eukaryotic-type primase small subunit family. As to quaternary structure, heterodimer of a small subunit (PriS) and a large subunit (PriL). Mg(2+) is required as a cofactor. Mn(2+) serves as cofactor.

Its function is as follows. Catalytic subunit of DNA primase, an RNA polymerase that catalyzes the synthesis of short RNA molecules used as primers for DNA polymerase during DNA replication. The small subunit contains the primase catalytic core and has DNA synthesis activity on its own. Binding to the large subunit stabilizes and modulates the activity, increasing the rate of DNA synthesis while decreasing the length of the DNA fragments, and conferring RNA synthesis capability. The DNA polymerase activity may enable DNA primase to also catalyze primer extension after primer synthesis. May also play a role in DNA repair. The polypeptide is DNA primase small subunit PriS (Hyperthermus butylicus (strain DSM 5456 / JCM 9403 / PLM1-5)).